The primary structure comprises 274 residues: Sulfur carrier protein FdhD (274 aa).

The active-site Cysteine persulfide intermediate is Cys-120.

This sequence belongs to the FdhD family.

Its subcellular location is the cytoplasm. Its function is as follows. Required for formate dehydrogenase (FDH) activity. Acts as a sulfur carrier protein that transfers sulfur from IscS to the molybdenum cofactor prior to its insertion into FDH. The sequence is that of Sulfur carrier protein FdhD from Burkholderia mallei (strain ATCC 23344).